Here is a 433-residue protein sequence, read N- to C-terminus: NADH-quinone oxidoreductase subunit D (433 aa).

Belongs to the complex I 49 kDa subunit family. NDH-1 is composed of 14 different subunits. Subunits NuoB, C, D, E, F, and G constitute the peripheral sector of the complex.

It is found in the cell membrane. It carries out the reaction a quinone + NADH + 5 H(+)(in) = a quinol + NAD(+) + 4 H(+)(out). Functionally, NDH-1 shuttles electrons from NADH, via FMN and iron-sulfur (Fe-S) centers, to quinones in the respiratory chain. The immediate electron acceptor for the enzyme in this species is believed to be a menaquinone. Couples the redox reaction to proton translocation (for every two electrons transferred, four hydrogen ions are translocated across the cytoplasmic membrane), and thus conserves the redox energy in a proton gradient. The polypeptide is NADH-quinone oxidoreductase subunit D (Cutibacterium acnes (strain DSM 16379 / KPA171202) (Propionibacterium acnes)).